A 77-amino-acid chain; its full sequence is Large ribosomal subunit protein uL29 (77 aa).

It belongs to the universal ribosomal protein uL29 family.

This Mycobacterium avium (strain 104) protein is Large ribosomal subunit protein uL29.